Consider the following 85-residue polypeptide: MRQGIHPDYHKVIFLDTTTNFKFLSGSTKTSSETMEWEDGNEYPVIRLDVSSDSHPFYTGRQKFAAADGRVERFNKKFGLKSNNN.

The protein belongs to the bacterial ribosomal protein bL31 family. Type B subfamily. Part of the 50S ribosomal subunit.

In Staphylococcus haemolyticus (strain JCSC1435), this protein is Large ribosomal subunit protein bL31B.